The sequence spans 322 residues: uncharacterized protein (322 aa).

The helical transmembrane segment at 212–234 (VCALLVGAISVATAGAAFSIIIV) threads the bilayer.

It is found in the membrane. This is an uncharacterized protein from Rickettsia prowazekii (strain Madrid E).